A 254-amino-acid polypeptide reads, in one-letter code: Adenosine 5'-phosphosulfate reductase (254 aa).

The [4Fe-4S] cluster site is built by C140, C141, C223, and C226. C249 functions as the Nucleophile; cysteine thiosulfonate intermediate in the catalytic mechanism.

Belongs to the PAPS reductase family. CysH subfamily. It depends on [4Fe-4S] cluster as a cofactor.

It localises to the cytoplasm. The enzyme catalyses [thioredoxin]-disulfide + sulfite + AMP + 2 H(+) = adenosine 5'-phosphosulfate + [thioredoxin]-dithiol. It participates in sulfur metabolism; hydrogen sulfide biosynthesis; sulfite from sulfate. In terms of biological role, catalyzes the formation of sulfite from adenosine 5'-phosphosulfate (APS) using thioredoxin as an electron donor. The polypeptide is Adenosine 5'-phosphosulfate reductase (Mycobacterium bovis (strain ATCC BAA-935 / AF2122/97)).